The primary structure comprises 292 residues: Protoheme IX farnesyltransferase (292 aa).

9 helical membrane-spanning segments follow: residues 11 to 31, 37 to 57, 85 to 105, 108 to 128, 133 to 153, 163 to 183, 199 to 219, 223 to 243, and 261 to 281; these read FGIVVFSVLAGLAGYATGFQI, WKIFLETLLGIYFLSSGSLAL, AAAGILSVGLLLVGMNMLFKL, VAGWVGLFCVFLYNGPYTLWW, VFAAVPGAIPGALPVTIGYAV, SLYLFLIMFLWQMPHFWVLAI, VALGMEKTMFQVGLYTLVYVG, AAPMFVHASWMFVLLTFPFVF, and WLAFFMWLNVSMLVFIIIPVI.

It belongs to the UbiA prenyltransferase family. Protoheme IX farnesyltransferase subfamily.

The protein resides in the cell inner membrane. The enzyme catalyses heme b + (2E,6E)-farnesyl diphosphate + H2O = Fe(II)-heme o + diphosphate. It functions in the pathway porphyrin-containing compound metabolism; heme O biosynthesis; heme O from protoheme: step 1/1. Its function is as follows. Converts heme B (protoheme IX) to heme O by substitution of the vinyl group on carbon 2 of heme B porphyrin ring with a hydroxyethyl farnesyl side group. The sequence is that of Protoheme IX farnesyltransferase from Bdellovibrio bacteriovorus (strain ATCC 15356 / DSM 50701 / NCIMB 9529 / HD100).